The following is a 361-amino-acid chain: Peptide chain release factor 1 (361 aa).

Glutamine 237 bears the N5-methylglutamine mark. The disordered stretch occupies residues 287–306; sequence KRAAEEASTRKSLVGSGDRS.

It belongs to the prokaryotic/mitochondrial release factor family. Post-translationally, methylated by PrmC. Methylation increases the termination efficiency of RF1.

Its subcellular location is the cytoplasm. In terms of biological role, peptide chain release factor 1 directs the termination of translation in response to the peptide chain termination codons UAG and UAA. The protein is Peptide chain release factor 1 of Alteromonas mediterranea (strain DSM 17117 / CIP 110805 / LMG 28347 / Deep ecotype).